Consider the following 519-residue polypeptide: O-fucosyltransferase 1 (519 aa).

Over 1–24 (MRRLGHHRLHGKTGGVGTKGMVAK) the chain is Cytoplasmic. Residues 25–45 (LSIGVIVLLICTLSLLFSANI) traverse the membrane as a helical; Signal-anchor for type II membrane protein segment. The Lumenal segment spans residues 46–519 (GSNREPTRPS…TNSTVTGLER (474 aa)). The segment at 67-86 (KSGGWRPSSAPRSDWPPPTK) is disordered. Asparagine 118 is a glycosylation site (N-linked (GlcNAc...) asparagine). Residue 260–262 (HLR) participates in substrate binding. N-linked (GlcNAc...) asparagine glycosylation is found at asparagine 327, asparagine 357, and asparagine 511. Residues 497–519 (RLESIRDPDSTSQTNSTVTGLER) are disordered. Over residues 506 to 519 (STSQTNSTVTGLER) the composition is skewed to polar residues.

This sequence belongs to the glycosyltransferase GT106 family.

The protein resides in the golgi apparatus membrane. The protein operates within glycan metabolism. The protein is O-fucosyltransferase 1 of Arabidopsis thaliana (Mouse-ear cress).